A 362-amino-acid chain; its full sequence is tRNA-specific 2-thiouridylase MnmA (362 aa).

Residues 6 to 13 and Leu32 contribute to the ATP site; that span reads AMSGGVDS. Cys101 serves as the catalytic Nucleophile. The cysteines at positions 101 and 197 are disulfide-linked. Position 125 (Gly125) interacts with ATP. Positions 147 to 149 are interaction with tRNA; sequence KDQ. The active-site Cysteine persulfide intermediate is the Cys197.

This sequence belongs to the MnmA/TRMU family.

It localises to the cytoplasm. The catalysed reaction is S-sulfanyl-L-cysteinyl-[protein] + uridine(34) in tRNA + AH2 + ATP = 2-thiouridine(34) in tRNA + L-cysteinyl-[protein] + A + AMP + diphosphate + H(+). In terms of biological role, catalyzes the 2-thiolation of uridine at the wobble position (U34) of tRNA, leading to the formation of s(2)U34. This is tRNA-specific 2-thiouridylase MnmA from Saccharopolyspora erythraea (strain ATCC 11635 / DSM 40517 / JCM 4748 / NBRC 13426 / NCIMB 8594 / NRRL 2338).